Reading from the N-terminus, the 144-residue chain is uncharacterized protein (144 aa).

The N-terminal stretch at 1–23 (MVIPLRNKYGILFLIAVCIMVSG) is a signal peptide. Residues 119 to 144 (QNGQRKTMTRIESKTGREEKDEKSKS) are disordered. A compositionally biased stretch (basic and acidic residues) spans 127-144 (TRIESKTGREEKDEKSKS).

This is an uncharacterized protein from Bacillus subtilis (strain 168).